The chain runs to 201 residues: dITP/XTP pyrophosphatase (201 aa).

8 to 13 (TTNENK) contributes to the substrate binding site. Asp68 (proton acceptor) is an active-site residue. Residue Asp68 participates in Mg(2+) binding. Substrate-binding positions include Ser69, 155-158 (FGYD), Lys177, and 182-183 (HR).

Belongs to the HAM1 NTPase family. Homodimer. The cofactor is Mg(2+).

It carries out the reaction XTP + H2O = XMP + diphosphate + H(+). The catalysed reaction is dITP + H2O = dIMP + diphosphate + H(+). It catalyses the reaction ITP + H2O = IMP + diphosphate + H(+). In terms of biological role, pyrophosphatase that catalyzes the hydrolysis of nucleoside triphosphates to their monophosphate derivatives, with a high preference for the non-canonical purine nucleotides XTP (xanthosine triphosphate), dITP (deoxyinosine triphosphate) and ITP. Seems to function as a house-cleaning enzyme that removes non-canonical purine nucleotides from the nucleotide pool, thus preventing their incorporation into DNA/RNA and avoiding chromosomal lesions. This chain is dITP/XTP pyrophosphatase, found in Borreliella burgdorferi (strain ATCC 35210 / DSM 4680 / CIP 102532 / B31) (Borrelia burgdorferi).